A 365-amino-acid polypeptide reads, in one-letter code: uncharacterized protein (365 aa).

This sequence belongs to the NAD(P)-dependent epimerase/dehydratase family.

Its subcellular location is the cytoplasm. The protein resides in the nucleus. This is an uncharacterized protein from Schizosaccharomyces pombe (strain 972 / ATCC 24843) (Fission yeast).